The sequence spans 374 residues: Probable plastid-lipid-associated protein 3, chloroplastic (374 aa).

The transit peptide at 1-46 (MAMPPPLFAAASHASLLLPSPTIHSSTGSRRPFRLPLRSSRRPPVA) directs the protein to the chloroplast. The segment at 19–148 (PSPTIHSSTG…EDNEEERREE (130 aa)) is disordered. Over residues 28–54 (GSRRPFRLPLRSSRRPPVAAAAASGVP) the composition is skewed to low complexity. 2 stretches are compositionally biased toward pro residues: residues 64 to 73 (APEPPSQPDP) and 127 to 136 (PAPPPPPPPV).

The protein belongs to the PAP/fibrillin family.

The protein localises to the plastid. The protein resides in the chloroplast. This chain is Probable plastid-lipid-associated protein 3, chloroplastic (PAP3), found in Oryza sativa subsp. japonica (Rice).